We begin with the raw amino-acid sequence, 462 residues long: uncharacterized protein (462 aa).

One can recognise a TRAM domain in the interval 12-70; the sequence is MLKKNDIIQVAISDLSHEGAGVAKHDGFVFFVDNALPEEVIDMRVLKVNKNSGFGKVEA. S-adenosyl-L-methionine contacts are provided by Gln294, Tyr323, Glu344, and Asp392. Catalysis depends on Cys419, which acts as the Nucleophile.

Belongs to the class I-like SAM-binding methyltransferase superfamily. RNA M5U methyltransferase family.

This is an uncharacterized protein from Streptococcus pyogenes serotype M3 (strain ATCC BAA-595 / MGAS315).